Here is an 860-residue protein sequence, read N- to C-terminus: Leucine--tRNA ligase (860 aa).

A 'HIGH' region motif is present at residues 42 to 52 (PYPSGRLHMGH). The short motif at 619 to 623 (KMSKS) is the 'KMSKS' region element. Residue K622 participates in ATP binding.

This sequence belongs to the class-I aminoacyl-tRNA synthetase family.

It localises to the cytoplasm. The enzyme catalyses tRNA(Leu) + L-leucine + ATP = L-leucyl-tRNA(Leu) + AMP + diphosphate. This Escherichia coli (strain ATCC 8739 / DSM 1576 / NBRC 3972 / NCIMB 8545 / WDCM 00012 / Crooks) protein is Leucine--tRNA ligase.